The chain runs to 385 residues: Mannitol-1-phosphate 5-dehydrogenase (385 aa).

4 to 15 (AVHFGAGNIGRG) contacts NAD(+).

The protein belongs to the mannitol dehydrogenase family.

The enzyme catalyses D-mannitol 1-phosphate + NAD(+) = beta-D-fructose 6-phosphate + NADH + H(+). In Lactococcus lactis subsp. lactis (strain IL1403) (Streptococcus lactis), this protein is Mannitol-1-phosphate 5-dehydrogenase.